The chain runs to 166 residues: Orotate phosphoribosyltransferase (166 aa).

Residues arginine 83, lysine 84, arginine 86, histidine 88, and 108–116 (EDVVTTGNS) contribute to the 5-phospho-alpha-D-ribose 1-diphosphate site. 2 residues coordinate orotate: threonine 112 and arginine 140.

It belongs to the purine/pyrimidine phosphoribosyltransferase family. PyrE subfamily. Homodimer. The cofactor is Mg(2+).

It catalyses the reaction orotidine 5'-phosphate + diphosphate = orotate + 5-phospho-alpha-D-ribose 1-diphosphate. Its pathway is pyrimidine metabolism; UMP biosynthesis via de novo pathway; UMP from orotate: step 1/2. Catalyzes the transfer of a ribosyl phosphate group from 5-phosphoribose 1-diphosphate to orotate, leading to the formation of orotidine monophosphate (OMP). The chain is Orotate phosphoribosyltransferase from Thermoplasma volcanium (strain ATCC 51530 / DSM 4299 / JCM 9571 / NBRC 15438 / GSS1).